Here is a 961-residue protein sequence, read N- to C-terminus: E4 ubiquitin-protein ligase UFD2 (961 aa).

Residues 880–954 (DVPDEFLDPL…LCFKKQKKEE (75 aa)) form the U-box domain.

This sequence belongs to the ubiquitin conjugation factor E4 family. Interacts with CDC48. Interacts with the ubiquitin-like domain of RAD23 and DSK2. Interacts with PEX29.

The protein resides in the cytoplasm. It is found in the nucleus. The catalysed reaction is S-ubiquitinyl-[E2 ubiquitin-conjugating enzyme]-L-cysteine + [acceptor protein]-L-lysine = [E2 ubiquitin-conjugating enzyme]-L-cysteine + N(6)-ubiquitinyl-[acceptor protein]-L-lysine.. The protein operates within protein modification; protein ubiquitination. In terms of biological role, E4 ubiquitin chain-elongation enzyme specifically involved in polyubiquitin chain assembly. Binds to CDC48 and elongates mono- and diubiquitinated ERAD substrates presented by the UFD1-NPL4-CDC48/p97 (UNC) AAA ATPase complex to a chain length of 4 to 6 ubiquitin moieties. Delivers these polyubiquitinated substrates to RAD23 and DSK2, which target them to the proteasome. Has E3 ubiquitin-protein ligase activity, accepting ubiquitin from its cognate E2 ubiquitin-conjugating enzyme UBC4. Enhances ubiquitination at 'Lys-48', but not at 'Lys-29' of the Ub moiety. Promotes ubiquitin chain elongation at 'Lys-48' on the DOA10 substrate PEX29. Also involved in the proteolytic processing of the ER-bound transcription factor SPT23. This chain is E4 ubiquitin-protein ligase UFD2 (UFD2), found in Saccharomyces cerevisiae (strain ATCC 204508 / S288c) (Baker's yeast).